The chain runs to 206 residues: Orotate phosphoribosyltransferase (206 aa).

Residues Arg-97, Lys-98, Lys-101, and 125–133 (NDVIASGRS) contribute to the 5-phospho-alpha-D-ribose 1-diphosphate site. Position 157 (Arg-157) interacts with orotate.

It belongs to the purine/pyrimidine phosphoribosyltransferase family. PyrE subfamily. As to quaternary structure, homodimer. Mg(2+) serves as cofactor.

The enzyme catalyses orotidine 5'-phosphate + diphosphate = orotate + 5-phospho-alpha-D-ribose 1-diphosphate. It functions in the pathway pyrimidine metabolism; UMP biosynthesis via de novo pathway; UMP from orotate: step 1/2. In terms of biological role, catalyzes the transfer of a ribosyl phosphate group from 5-phosphoribose 1-diphosphate to orotate, leading to the formation of orotidine monophosphate (OMP). This Chlamydia caviae (strain ATCC VR-813 / DSM 19441 / 03DC25 / GPIC) (Chlamydophila caviae) protein is Orotate phosphoribosyltransferase.